We begin with the raw amino-acid sequence, 242 residues long: Large ribosomal subunit protein uL1 (242 aa).

This sequence belongs to the universal ribosomal protein uL1 family. Part of the 50S ribosomal subunit.

Its function is as follows. Binds directly to 23S rRNA. The L1 stalk is quite mobile in the ribosome, and is involved in E site tRNA release. In terms of biological role, protein L1 is also a translational repressor protein, it controls the translation of the L11 operon by binding to its mRNA. The polypeptide is Large ribosomal subunit protein uL1 (Kitasatospora aureofaciens (Streptomyces aureofaciens)).